We begin with the raw amino-acid sequence, 282 residues long: Pantothenate synthetase (282 aa).

30–37 (MGYLHEGH) is an ATP binding site. H37 (proton donor) is an active-site residue. Q61 lines the (R)-pantoate pocket. Q61 contacts beta-alanine. Position 147 to 150 (147 to 150 (GMKD)) interacts with ATP. Q153 is a (R)-pantoate binding site. Residues V176 and 184-187 (KSSR) contribute to the ATP site.

Belongs to the pantothenate synthetase family. In terms of assembly, homodimer.

It localises to the cytoplasm. The enzyme catalyses (R)-pantoate + beta-alanine + ATP = (R)-pantothenate + AMP + diphosphate + H(+). It functions in the pathway cofactor biosynthesis; (R)-pantothenate biosynthesis; (R)-pantothenate from (R)-pantoate and beta-alanine: step 1/1. Functionally, catalyzes the condensation of pantoate with beta-alanine in an ATP-dependent reaction via a pantoyl-adenylate intermediate. The protein is Pantothenate synthetase of Bacillus thuringiensis subsp. konkukian (strain 97-27).